A 149-amino-acid chain; its full sequence is Sec-independent protein translocase protein TatB (149 aa).

Residues 1–21 (MFDIGFTELIVIGIVALVVVG) form a helical membrane-spanning segment. The disordered stretch occupies residues 92-149 (VDMLDKSVRNEPQNAQTPPQTADAEPAQPDVRQQTLPLEEPDQNRAAGEPSSTSTRPA). The span at 101–111 (NEPQNAQTPPQ) shows a compositional bias: polar residues.

It belongs to the TatB family. As to quaternary structure, the Tat system comprises two distinct complexes: a TatABC complex, containing multiple copies of TatA, TatB and TatC subunits, and a separate TatA complex, containing only TatA subunits. Substrates initially bind to the TatABC complex, which probably triggers association of the separate TatA complex to form the active translocon.

The protein resides in the cell inner membrane. Functionally, part of the twin-arginine translocation (Tat) system that transports large folded proteins containing a characteristic twin-arginine motif in their signal peptide across membranes. Together with TatC, TatB is part of a receptor directly interacting with Tat signal peptides. TatB may form an oligomeric binding site that transiently accommodates folded Tat precursor proteins before their translocation. The chain is Sec-independent protein translocase protein TatB from Thiobacillus denitrificans (strain ATCC 25259 / T1).